A 436-amino-acid polypeptide reads, in one-letter code: 3-ketoacyl-CoA thiolase (436 aa).

Catalysis depends on cysteine 99, which acts as the Acyl-thioester intermediate. Residues histidine 392 and cysteine 422 each act as proton acceptor in the active site.

This sequence belongs to the thiolase-like superfamily. Thiolase family. Heterotetramer of two alpha chains (FadJ) and two beta chains (FadI).

Its subcellular location is the cytoplasm. It carries out the reaction an acyl-CoA + acetyl-CoA = a 3-oxoacyl-CoA + CoA. It participates in lipid metabolism; fatty acid beta-oxidation. Functionally, catalyzes the final step of fatty acid oxidation in which acetyl-CoA is released and the CoA ester of a fatty acid two carbons shorter is formed. This chain is 3-ketoacyl-CoA thiolase, found in Shewanella baltica (strain OS155 / ATCC BAA-1091).